The following is a 426-amino-acid chain: Glutamate-1-semialdehyde 2,1-aminomutase (426 aa).

Lysine 265 is subject to N6-(pyridoxal phosphate)lysine.

This sequence belongs to the class-III pyridoxal-phosphate-dependent aminotransferase family. HemL subfamily. As to quaternary structure, homodimer. It depends on pyridoxal 5'-phosphate as a cofactor.

Its subcellular location is the cytoplasm. It catalyses the reaction (S)-4-amino-5-oxopentanoate = 5-aminolevulinate. Its pathway is porphyrin-containing compound metabolism; protoporphyrin-IX biosynthesis; 5-aminolevulinate from L-glutamyl-tRNA(Glu): step 2/2. This chain is Glutamate-1-semialdehyde 2,1-aminomutase, found in Actinobacillus pleuropneumoniae serotype 7 (strain AP76).